The sequence spans 250 residues: 3-deoxy-manno-octulosonate cytidylyltransferase (250 aa).

This sequence belongs to the KdsB family.

It localises to the cytoplasm. It catalyses the reaction 3-deoxy-alpha-D-manno-oct-2-ulosonate + CTP = CMP-3-deoxy-beta-D-manno-octulosonate + diphosphate. The protein operates within nucleotide-sugar biosynthesis; CMP-3-deoxy-D-manno-octulosonate biosynthesis; CMP-3-deoxy-D-manno-octulosonate from 3-deoxy-D-manno-octulosonate and CTP: step 1/1. It participates in bacterial outer membrane biogenesis; lipopolysaccharide biosynthesis. In terms of biological role, activates KDO (a required 8-carbon sugar) for incorporation into bacterial lipopolysaccharide in Gram-negative bacteria. The polypeptide is 3-deoxy-manno-octulosonate cytidylyltransferase (Thioalkalivibrio sulfidiphilus (strain HL-EbGR7)).